Consider the following 142-residue polypeptide: Hemoglobin subunit alpha-A (142 aa).

In terms of domain architecture, Globin spans 2–142; that stretch reads VLSAADKTNV…VGTVLTAKYR (141 aa). Histidine 59 is a binding site for O2. Histidine 88 is a binding site for heme b.

This sequence belongs to the globin family. As to quaternary structure, heterotetramer of two alpha chains and two beta chains. In terms of tissue distribution, red blood cells.

In terms of biological role, involved in oxygen transport from the lung to the various peripheral tissues. In Anser anser anser (Western greylag goose), this protein is Hemoglobin subunit alpha-A (HBAA).